A 504-amino-acid chain; its full sequence is D-alanine--D-alanyl carrier protein ligase (504 aa).

Position 152–153 (152–153 (TS)) interacts with ATP. Residue D197 coordinates D-alanine. 292 to 297 (NTYGPT) is an ATP binding site. Residue V301 coordinates D-alanine. Residues D383, 394–397 (YNGR), and K492 contribute to the ATP site. K492 contributes to the D-alanine binding site.

It belongs to the ATP-dependent AMP-binding enzyme family. DltA subfamily.

It localises to the cytoplasm. The catalysed reaction is holo-[D-alanyl-carrier protein] + D-alanine + ATP = D-alanyl-[D-alanyl-carrier protein] + AMP + diphosphate. The protein operates within cell wall biogenesis; lipoteichoic acid biosynthesis. In terms of biological role, catalyzes the first step in the D-alanylation of lipoteichoic acid (LTA), the activation of D-alanine and its transfer onto the D-alanyl carrier protein (Dcp) DltC. In an ATP-dependent two-step reaction, forms a high energy D-alanyl-AMP intermediate, followed by transfer of the D-alanyl residue as a thiol ester to the phosphopantheinyl prosthetic group of the Dcp. D-alanylation of LTA plays an important role in modulating the properties of the cell wall in Gram-positive bacteria, influencing the net charge of the cell wall. This is D-alanine--D-alanyl carrier protein ligase from Bacillus cereus (strain B4264).